The sequence spans 1710 residues: Protein NETWORKED 1B (1710 aa).

The region spanning 13–92 is the NAB domain; it reads YSWWWDSHIP…ERYDHTTVEL (80 aa). Positions 113-159 are disordered; it reads EDSASSSSEPRTEADTEALQKDGTKSKRSFSQMNKLDGTSDSHEADS. Composition is skewed to basic and acidic residues over residues 122–137 and 150–159; these read PRTE…DGTK and GTSDSHEADS. Coiled-coil stretches lie at residues 152–446, 474–546, 579–883, 974–1021, 1095–1259, and 1285–1336; these read SDSH…ELGA, QMLR…EIHC, VKKL…IDSL, HQCG…FESL, VSSL…LQEK, and LILE…LSAY. Residues 1409 to 1448 are disordered; sequence RLSRQITRSTSQKRRDRRKIENIQPDDQVTGESRQPRLRP. Positions 1559-1665 form a coiled coil; the sequence is RRLSSLRISL…VLKLEDGTKS (107 aa).

It belongs to the NET family. Expressed in root meristems and at very low levels throughout mature vasculature.

Plant-specific actin binding protein. May be part of a membrane-cytoskeletal adapter complex. This chain is Protein NETWORKED 1B, found in Arabidopsis thaliana (Mouse-ear cress).